Reading from the N-terminus, the 449-residue chain is MLNYTELENKNVLVVGLAKSGYEAAKLLLKLGANVKVNDGKDLSQDAHAKDLESMGIEVISGSHPFSLLDDNPIIVKNPGIPYTVSIIEEAAKRGLKILTEVELSYLISEAPIIAVTGTNGKTTVTSLIGDMFQKSVLTGRLSGNIGYVASNVAQEVKSDEYLITELSSFQLLGIEKYKPHIAIITNIYSAHLDYHETLENYQNAKKQIYKNQTKDDYLICNYHQRHLIESENLEAKTFYFSTQQEVDGIYIKDGFIVFNGIRIINTKDLVLPGEHNLENILAAVLASIIAGVPVKAIVDSLVTFSGIDHRLQYIGTNRTNKYYNDSKATNTLATQFALNSFDQPIIWLCGGLDRGNEFDELIPYMENVRVMVVFGETQDKFAKLGNSQGKYVIKATDVEDAVDKIQDIVEPNDVVLLSPACASWDQYHTFEERGEKFIDRFRAHLPSY.

118 to 124 (GTNGKTT) provides a ligand contact to ATP.

This sequence belongs to the MurCDEF family.

Its subcellular location is the cytoplasm. It catalyses the reaction UDP-N-acetyl-alpha-D-muramoyl-L-alanine + D-glutamate + ATP = UDP-N-acetyl-alpha-D-muramoyl-L-alanyl-D-glutamate + ADP + phosphate + H(+). Its pathway is cell wall biogenesis; peptidoglycan biosynthesis. In terms of biological role, cell wall formation. Catalyzes the addition of glutamate to the nucleotide precursor UDP-N-acetylmuramoyl-L-alanine (UMA). The chain is UDP-N-acetylmuramoylalanine--D-glutamate ligase from Staphylococcus epidermidis (strain ATCC 35984 / DSM 28319 / BCRC 17069 / CCUG 31568 / BM 3577 / RP62A).